A 112-amino-acid polypeptide reads, in one-letter code: Large ribosomal subunit protein bL17 (112 aa).

Belongs to the bacterial ribosomal protein bL17 family. As to quaternary structure, part of the 50S ribosomal subunit. Contacts protein L32.

The protein is Large ribosomal subunit protein bL17 of Desulforamulus reducens (strain ATCC BAA-1160 / DSM 100696 / MI-1) (Desulfotomaculum reducens).